A 222-amino-acid chain; its full sequence is Large ribosomal subunit protein uL11c (222 aa).

The tract at residues 1 to 20 is disordered; the sequence is MASSSLSTLCSSTSSSLHPN. The N-terminal 62 residues, 1 to 62, are a transit peptide targeting the chloroplast; it reads MASSSLSTLC…TPRFLTVIAM (62 aa).

This sequence belongs to the universal ribosomal protein uL11 family. In terms of assembly, part of the ribosomal stalk of the 50S ribosomal subunit. Interacts with L10 and the large rRNA to form the base of the stalk. L10 forms an elongated spine to which L12 dimers bind in a sequential fashion forming a multimeric L10(L12)X complex.

It localises to the plastid. The protein localises to the chloroplast. Its function is as follows. Forms part of the ribosomal stalk which helps the ribosome interact with GTP-bound translation factors. This chain is Large ribosomal subunit protein uL11c (RPL11), found in Arabidopsis thaliana (Mouse-ear cress).